Reading from the N-terminus, the 304-residue chain is tRNA dimethylallyltransferase (304 aa).

10–17 (GPTASGKS) is an ATP binding site. 12–17 (TASGKS) lines the substrate pocket. An interaction with substrate tRNA region spans residues 35–38 (DSRQ).

The protein belongs to the IPP transferase family. As to quaternary structure, monomer. It depends on Mg(2+) as a cofactor.

The enzyme catalyses adenosine(37) in tRNA + dimethylallyl diphosphate = N(6)-dimethylallyladenosine(37) in tRNA + diphosphate. In terms of biological role, catalyzes the transfer of a dimethylallyl group onto the adenine at position 37 in tRNAs that read codons beginning with uridine, leading to the formation of N6-(dimethylallyl)adenosine (i(6)A). The polypeptide is tRNA dimethylallyltransferase (Gloeothece citriformis (strain PCC 7424) (Cyanothece sp. (strain PCC 7424))).